We begin with the raw amino-acid sequence, 1034 residues long: Beta-galactosidase (1034 aa).

Substrate-binding residues include N108 and D207. D207 provides a ligand contact to Na(+). Residues E423, H425, and E468 each coordinate Mg(2+). Substrate is bound by residues E468 and 544–547; that span reads EYAH. The Proton donor role is filled by E468. The active-site Nucleophile is E544. N604 is a binding site for Mg(2+). 2 residues coordinate Na(+): F608 and N611. Residues N611 and W1010 each contribute to the substrate site.

This sequence belongs to the glycosyl hydrolase 2 family. As to quaternary structure, homotetramer. Mg(2+) serves as cofactor. It depends on Na(+) as a cofactor.

It carries out the reaction Hydrolysis of terminal non-reducing beta-D-galactose residues in beta-D-galactosides.. The protein is Beta-galactosidase of Klebsiella pneumoniae.